Consider the following 455-residue polypeptide: Chromosomal replication initiator protein DnaA (455 aa).

A domain I, interacts with DnaA modulators region spans residues 1–74 (MFNFEKFWQH…IQSAYGYAGV (74 aa)). A domain II region spans residues 74–117 (VELLPVFQISEDSDTPERIVTPEPQHNLQTTPTRAPQREFAKDL). The segment at 118 to 334 (KLNEKYTFDN…GALVKVQAYA (217 aa)) is domain III, AAA+ region. Positions 162, 164, 165, and 166 each coordinate ATP. Positions 335–455 (TIEKADIDIN…VFDLKQMLEH (121 aa)) are domain IV, binds dsDNA.

Belongs to the DnaA family. As to quaternary structure, oligomerizes as a right-handed, spiral filament on DNA at oriC.

The protein resides in the cytoplasm. In terms of biological role, plays an essential role in the initiation and regulation of chromosomal replication. ATP-DnaA binds to the origin of replication (oriC) to initiate formation of the DNA replication initiation complex once per cell cycle. Binds the DnaA box (a 9 base pair repeat at the origin) and separates the double-stranded (ds)DNA. Forms a right-handed helical filament on oriC DNA; dsDNA binds to the exterior of the filament while single-stranded (ss)DNA is stabiized in the filament's interior. The ATP-DnaA-oriC complex binds and stabilizes one strand of the AT-rich DNA unwinding element (DUE), permitting loading of DNA polymerase. After initiation quickly degrades to an ADP-DnaA complex that is not apt for DNA replication. Binds acidic phospholipids. The sequence is that of Chromosomal replication initiator protein DnaA from Lactobacillus acidophilus (strain ATCC 700396 / NCK56 / N2 / NCFM).